The sequence spans 167 residues: NAD(P)H-quinone oxidoreductase subunit I, chloroplastic (167 aa).

4Fe-4S ferredoxin-type domains lie at 55–84 (GRIH…VDWK) and 95–124 (LNYS…MTEE). Residues Cys-64, Cys-67, Cys-70, Cys-74, Cys-104, Cys-107, Cys-110, and Cys-114 each contribute to the [4Fe-4S] cluster site.

This sequence belongs to the complex I 23 kDa subunit family. In terms of assembly, NDH is composed of at least 16 different subunits, 5 of which are encoded in the nucleus. It depends on [4Fe-4S] cluster as a cofactor.

It localises to the plastid. Its subcellular location is the chloroplast thylakoid membrane. The catalysed reaction is a plastoquinone + NADH + (n+1) H(+)(in) = a plastoquinol + NAD(+) + n H(+)(out). It carries out the reaction a plastoquinone + NADPH + (n+1) H(+)(in) = a plastoquinol + NADP(+) + n H(+)(out). NDH shuttles electrons from NAD(P)H:plastoquinone, via FMN and iron-sulfur (Fe-S) centers, to quinones in the photosynthetic chain and possibly in a chloroplast respiratory chain. The immediate electron acceptor for the enzyme in this species is believed to be plastoquinone. Couples the redox reaction to proton translocation, and thus conserves the redox energy in a proton gradient. The polypeptide is NAD(P)H-quinone oxidoreductase subunit I, chloroplastic (Eucalyptus globulus subsp. globulus (Tasmanian blue gum)).